A 509-amino-acid chain; its full sequence is Cytochrome P450 monooxygenase CYP512U6 (509 aa).

Residues 12–29 (VFACVAVVIAIYAVRWYT) form a helical membrane-spanning segment. Cys-446 contacts heme.

The protein belongs to the cytochrome P450 family. Requires heme as cofactor.

It localises to the membrane. The enzyme catalyses ganoderate DM + reduced [NADPH--hemoprotein reductase] + O2 = hainanate A + oxidized [NADPH--hemoprotein reductase] + H2O + H(+). It carries out the reaction ganoderate TR + reduced [NADPH--hemoprotein reductase] + O2 = ganoderate Jc + oxidized [NADPH--hemoprotein reductase] + H2O + H(+). It functions in the pathway secondary metabolite biosynthesis; terpenoid biosynthesis. Functionally, cytochrome P450 monooxygenase that hydroxylates the ganoderic acids DM and TR at the C-23 position to produce hainanic acid A and ganoderic acid Jc, respectively. This chain is Cytochrome P450 monooxygenase CYP512U6, found in Ganoderma lucidum (Ling zhi medicinal fungus).